Reading from the N-terminus, the 78-residue chain is Defensin SD2 (78 aa).

The first 20 residues, M1–A20, serve as a signal peptide directing secretion. Disulfide bonds link C34-C78, C45-C65, C51-C72, and C55-C74.

This sequence belongs to the DEFL family. In terms of tissue distribution, highest expression in flowers and to a lesser extent in leaves. Lower levels in hypocotyls. No expression in roots and cotyledons.

The protein resides in the secreted. Its subcellular location is the cell wall. May play a protective role in flowers by protecting the reproductive organs from potential pathogen attack. The polypeptide is Defensin SD2 (SD2) (Helianthus annuus (Common sunflower)).